A 1129-amino-acid polypeptide reads, in one-letter code: Large proline-rich protein bag6 (1129 aa).

Residues 1–76 (MEVTVKTLDS…HLVERAPPQT (76 aa)) form the Ubiquitin-like domain. Disordered stretches follow at residues 69 to 108 (VERA…PERN), 187 to 235 (QPVN…SPSE), 347 to 402 (TGNG…HPHP), 490 to 518 (PAAP…VPGA), 550 to 606 (GSNT…QHLS), 654 to 692 (VPVS…ESLP), 942 to 967 (VPQA…NGAA), and 987 to 1009 (VPTI…QWAA). Low complexity predominate over residues 73-105 (PPQTQPSTGGPSTSSSTSPSSSNAANVPGAGAP). 2 stretches are compositionally biased toward polar residues: residues 209 to 232 (RETL…SHPS) and 364 to 383 (HTPT…QPPS). Low complexity-rich tracts occupy residues 553-593 (TPSS…SSGP) and 655-666 (PVSTSPPQSASQ). Pro residues predominate over residues 667-686 (APPPSSPSPPPAHSSPPPAA). A compositionally biased stretch (polar residues) spans 947 to 956 (EASSQDQPME).

In terms of assembly, component of the bag6/bat3 complex.

The protein resides in the cytoplasm. The protein localises to the cytosol. It localises to the nucleus. Its subcellular location is the secreted. It is found in the extracellular exosome. Its function is as follows. ATP-independent molecular chaperone preventing the aggregation of misfolded and hydrophobic patches-containing proteins. Functions as part of a cytosolic protein quality control complex, the bag6/bat3 complex, which maintains these client proteins in a soluble state and participates in their proper delivery to the endoplasmic reticulum or alternatively can promote their sorting to the proteasome where they undergo degradation. The bag6/bat3 complex is involved in the post-translational delivery of tail-anchored/type II transmembrane proteins to the endoplasmic reticulum membrane. Similarly, the bag6/bat3 complex also functions as a sorting platform for proteins of the secretory pathway that are mislocalized to the cytosol either delivering them to the proteasome for degradation or to the endoplasmic reticulum. The bag6/bat3 complex also plays a role in the endoplasmic reticulum-associated degradation (ERAD), a quality control mechanism that eliminates unwanted proteins of the endoplasmic reticulum through their retrotranslocation to the cytosol and their targeting to the proteasome. It maintains these retrotranslocated proteins in an unfolded yet soluble state condition in the cytosol to ensure their proper delivery to the proteasome. Also required for selective ubiquitin-mediated degradation of defective nascent chain polypeptides by the proteasome. Also involved in endoplasmic reticulum stress-induced pre-emptive quality control, a mechanism that selectively attenuates the translocation of newly synthesized proteins into the endoplasmic reticulum and reroutes them to the cytosol for proteasomal degradation. May ensure the proper degradation of these proteins and thereby protects the endoplasmic reticulum from protein overload upon stress. By stabilizing a large spectrum of proteins, may indirectly affect different biological processes including apoptosis. By controlling the steady-state expression of the IGF1R receptor, indirectly regulates the insulin-like growth factor receptor signaling pathway. Functionally, when nuclear, may also act as a component of some chromatin regulator complex. This is Large proline-rich protein bag6 from Xenopus tropicalis (Western clawed frog).